Here is a 177-residue protein sequence, read N- to C-terminus: MASSMMASTAAVARAGPAQSSMVAPFNGLRSSVAFPATRKANNDLSTLPSNGGRVSCMQVWPPEGLKKFETLSYLPPLSVEDLAKEVDYLLRNDWVPCIEFSKEGFVYRENHASPGYYDGRYWTMWKLPMFGCTDASQVIAEVEEAKKAYPEYFVRIIGFDNKRQVQCISFIAYKPT.

The N-terminal 56 residues, 1–56, are a transit peptide targeting the chloroplast; sequence MASSMMASTAAVARAGPAQSSMVAPFNGLRSSVAFPATRKANNDLSTLPSNGGRVS.

It belongs to the RuBisCO small chain family. As to quaternary structure, heterohexadecamer of 8 large and 8 small subunits.

It localises to the plastid. Its subcellular location is the chloroplast. RuBisCO catalyzes two reactions: the carboxylation of D-ribulose 1,5-bisphosphate, the primary event in carbon dioxide fixation, as well as the oxidative fragmentation of the pentose substrate. Both reactions occur simultaneously and in competition at the same active site. Although the small subunit is not catalytic it is essential for maximal activity. This chain is Ribulose bisphosphate carboxylase small subunit, chloroplastic 5, found in Lemna gibba (Swollen duckweed).